The primary structure comprises 220 residues: ATP-dependent Clp protease proteolytic subunit (220 aa).

Serine 125 acts as the Nucleophile in catalysis. Histidine 150 is a catalytic residue.

It belongs to the peptidase S14 family. Fourteen ClpP subunits assemble into 2 heptameric rings which stack back to back to give a disk-like structure with a central cavity, resembling the structure of eukaryotic proteasomes.

The protein resides in the cytoplasm. It carries out the reaction Hydrolysis of proteins to small peptides in the presence of ATP and magnesium. alpha-casein is the usual test substrate. In the absence of ATP, only oligopeptides shorter than five residues are hydrolyzed (such as succinyl-Leu-Tyr-|-NHMec, and Leu-Tyr-Leu-|-Tyr-Trp, in which cleavage of the -Tyr-|-Leu- and -Tyr-|-Trp bonds also occurs).. Its function is as follows. Cleaves peptides in various proteins in a process that requires ATP hydrolysis. Has a chymotrypsin-like activity. Plays a major role in the degradation of misfolded proteins. This is ATP-dependent Clp protease proteolytic subunit from Bacteroides thetaiotaomicron (strain ATCC 29148 / DSM 2079 / JCM 5827 / CCUG 10774 / NCTC 10582 / VPI-5482 / E50).